The following is a 183-amino-acid chain: MPDIRPHYFIGVPIPEGIANPIYQAAKNEPILTFQKWVHPLDYHITLIFLGAADETQIKKLEGSLAEIASEIDPFSIKFGKIDVFGDRRKPRVLHLEPKKNKTLDRLREHTKQAVLQAGFQVEKRPYHPHMTLARKWTGEDGFPAHVPFESGEVSMMAERFSLFQIHLNQSPKYEEIFKFQLS.

H44 functions as the Proton donor in the catalytic mechanism. 2 short sequence motifs (HXTX) span residues 44–47 and 130–133; these read HITL and HMTL. H130 functions as the Proton acceptor in the catalytic mechanism.

This sequence belongs to the 2H phosphoesterase superfamily. ThpR family.

The enzyme catalyses a 3'-end 2',3'-cyclophospho-ribonucleotide-RNA + H2O = a 3'-end 2'-phospho-ribonucleotide-RNA + H(+). Functionally, hydrolyzes RNA 2',3'-cyclic phosphodiester to an RNA 2'-phosphomonoester. The sequence is that of RNA 2',3'-cyclic phosphodiesterase (ytlP) from Bacillus subtilis (strain 168).